The primary structure comprises 222 residues: Flagellar L-ring protein (222 aa).

The first 18 residues, 1 to 18 (MKTTRAIAMLGLLLGLAA), serve as a signal peptide directing secretion. The N-palmitoyl cysteine moiety is linked to residue Cys-19. Residue Cys-19 is the site of S-diacylglycerol cysteine attachment.

This sequence belongs to the FlgH family. In terms of assembly, the basal body constitutes a major portion of the flagellar organelle and consists of four rings (L,P,S, and M) mounted on a central rod.

It localises to the cell outer membrane. It is found in the bacterial flagellum basal body. Functionally, assembles around the rod to form the L-ring and probably protects the motor/basal body from shearing forces during rotation. This Thiobacillus denitrificans (strain ATCC 25259 / T1) protein is Flagellar L-ring protein.